Here is a 97-residue protein sequence, read N- to C-terminus: Large ribosomal subunit protein bL31 (97 aa).

The tract at residues 75–97 (NKTKKSNQAKVEKQTRHRSINEL) is disordered. Basic and acidic residues predominate over residues 84-97 (KVEKQTRHRSINEL).

The protein belongs to the bacterial ribosomal protein bL31 family. Type A subfamily. As to quaternary structure, part of the 50S ribosomal subunit.

Binds the 23S rRNA. This chain is Large ribosomal subunit protein bL31, found in Mycoplasma genitalium (strain ATCC 33530 / DSM 19775 / NCTC 10195 / G37) (Mycoplasmoides genitalium).